Reading from the N-terminus, the 892-residue chain is Protein FAM193B (892 aa).

4 disordered regions span residues 1–78 (MTRR…TSSQ), 164–192 (SCGG…NSGD), 237–321 (EHHQ…PLLK), and 379–403 (DEGL…THPR). The segment covering 28–37 (APEPQPPPPS) has biased composition (pro residues). A compositionally biased stretch (basic and acidic residues) spans 56–65 (DGPREEEEPK). Residues 169–185 (SHSSSSSSSSSSSSSSS) show a composition bias toward low complexity. 3 stretches are compositionally biased toward pro residues: residues 248–258 (PNSPTGPPPHP), 274–285 (YPPPLPTTPVAP), and 309–321 (SPHP…PLLK). A compositionally biased stretch (acidic residues) spans 379 to 388 (DEGLGEEEDS). Over residues 391–400 (ERSSCTSSST) the composition is skewed to low complexity. Positions 485-517 (NSARAAKRARHKLKKKEKEKARLATEALKQVNR) form a coiled coil. 2 stretches are compositionally biased toward polar residues: residues 587–597 (LTPSDLSGSSQ) and 610–621 (TLGSPQSHTLQA). 2 disordered regions span residues 587–655 (LTPS…ENGL) and 671–837 (VKTP…SLDD). Over residues 637–650 (PPPWTEVRGPPPGI) the composition is skewed to pro residues. A compositionally biased stretch (low complexity) spans 736-757 (KSQVSSPKQPSKGSEPAKVGSG). Phosphoserine is present on residues Ser764, Ser776, and Ser882.

It belongs to the FAM193 family.

The protein localises to the cytoplasm. It localises to the nucleus. In Mus musculus (Mouse), this protein is Protein FAM193B (Fam193b).